Here is a 167-residue protein sequence, read N- to C-terminus: MADDATRKAVSDIPLLKTNSGPRDKELWVQRLREEYLALIKYVENNKVADNDWFRLESNKEGTRWFGKCWYIHDLMKYEFDVEFDIPVTYPTTAPEVAIPELDGKTAKMYRGGKICLTDHFKPLWARNVPKFGLAHLMALGLGPWLAVEIPDLISKGIVVHKEQQNN.

Cys116 functions as the Glycyl thioester intermediate in the catalytic mechanism.

The protein belongs to the ubiquitin-conjugating enzyme family. UFC1 subfamily. In terms of assembly, interacts with UBA5 (via C-terminus). Interacts with UFL1. Interacts with UFM1.

E2-like enzyme which specifically catalyzes the second step in ufmylation. Accepts the ubiquitin-like modifier UFM1 from the E1 enzyme UBA5 and forms an intermediate with UFM1 via a thioester linkage. Ufmylation is involved in various processes, such as ribosome recycling, response to DNA damage, interferon response or reticulophagy (also called ER-phagy). The chain is Ubiquitin-fold modifier-conjugating enzyme 1 from Osmerus mordax (Rainbow smelt).